Reading from the N-terminus, the 355-residue chain is Acyl-CoA desaturase 1 (355 aa).

The Cytoplasmic segment spans residues 1 to 68 (MPAHMLQEIS…EGPPPKLEYV (68 aa)). Residues 9 to 20 (ISSSYTTTTTIT) are compositionally biased toward low complexity. Residues 9–33 (ISSSYTTTTTITAPPSGNEREKVKT) form a disordered region. The chain crosses the membrane as a helical span at residues 69 to 89 (WRNIILMVLLHLGGLYGIILV). Asn71 contributes to the substrate binding site. Topologically, residues 90–93 (PSCK) are lumenal. A helical transmembrane segment spans residues 94 to 114 (LYTCLFGIFYYMTSALGITAG). Residues 115 to 213 (AHRLWSHRTY…EKLVMFQRRY (99 aa)) are Cytoplasmic-facing. His116 and His121 together coordinate Fe cation. The Histidine box-1 signature appears at 116–121 (HRLWSH). Residues Asn144, Arg151, and Asp152 each coordinate substrate. Fe cation contacts are provided by His153, His156, and His157. The short motif at 153-157 (HRAHH) is the Histidine box-2 element. The substrate site is built by Arg184 and Lys185. The chain crosses the membrane as a helical span at residues 214–233 (YKPGLLLMCFILPTLVPWYC). Topologically, residues 234–237 (WGET) are lumenal. The helical transmembrane segment at 238 to 259 (FVNSLFVSTFLRYTLVLNATWL) threads the bilayer. Trp258 contacts substrate. Topologically, residues 260-355 (VNSAAHLYGY…RTGDGSHKSS (96 aa)) are cytoplasmic. Fe cation is bound by residues His265, His294, His297, and His298. The Histidine box-3 signature appears at 294 to 298 (HNYHH).

The protein belongs to the fatty acid desaturase type 1 family. Fe(2+) is required as a cofactor. Detected in liver (at protein level). Detected in skin and liver. Detected in sebaceous gland, but not in hair follicle. Detected in white and brown adipose tissue, eyelid, Harderian gland, and at lower levels in Meibomian gland, eyeball and adrenal gland. Highly expressed in liver, and detected at low levels in brain, heart, lung, stomach, skeletal muscle and kidney.

It localises to the endoplasmic reticulum membrane. Its subcellular location is the microsome membrane. It carries out the reaction octadecanoyl-CoA + 2 Fe(II)-[cytochrome b5] + O2 + 2 H(+) = (9Z)-octadecenoyl-CoA + 2 Fe(III)-[cytochrome b5] + 2 H2O. Functionally, stearoyl-CoA desaturase that utilizes O(2) and electrons from reduced cytochrome b5 to introduce the first double bond into saturated fatty acyl-CoA substrates. Catalyzes the insertion of a cis double bond at the Delta-9 position into fatty acyl-CoA substrates including palmitoyl-CoA and stearoyl-CoA. Gives rise to a mixture of 16:1 and 18:1 unsaturated fatty acids. Plays an important role in lipid biosynthesis. Plays an important role in regulating the expression of genes that are involved in lipogenesis and in regulating mitochondrial fatty acid oxidation. Plays an important role in body energy homeostasis. Contributes to the biosynthesis of membrane phospholipids, cholesterol esters and triglycerides. Required for normal development of sebaceous glands. Required for the biosynthesis of normal levels of Delta-9 unsaturated fatty acids and 1-alkyl-2,3-diacylglycerol in the Harderian gland. Required for normal production of meibum, an oily material that prevents drying of the cornea. The sequence is that of Acyl-CoA desaturase 1 (Scd1) from Mus musculus (Mouse).